A 418-amino-acid chain; its full sequence is Deubiquitinase and deneddylase Dub1 (418 aa).

The span at 1–10 (MLSPTNSTSK) shows a compositional bias: polar residues. The tract at residues 1–23 (MLSPTNSTSKKAPVPPQDSSKPV) is disordered. Residues 40-60 (TALAVLLVVVTLGLILLFYSF) traverse the membrane as a helical segment. Positions 72–143 (TRPSTKEQPT…PPLPPKAPKP (72 aa)) are disordered. The segment covering 86-141 (VPLPSPPLAVPRPSTPPPPVISRPSTPPAPTPAISPPSTPSAPKPSTPPPLPPKAP) has biased composition (pro residues). Catalysis depends on residues His-288, Asp-305, and Cys-358.

Belongs to the peptidase C48 family.

It localises to the secreted. The protein localises to the host cell. Its subcellular location is the membrane. Effector proteins function to alter host cell physiology and promote bacterial survival in host tissues. This protease possesses deubiquitinating and deneddylating activities. This Chlamydia trachomatis serovar D (strain ATCC VR-885 / DSM 19411 / UW-3/Cx) protein is Deubiquitinase and deneddylase Dub1 (cdu1).